A 102-amino-acid polypeptide reads, in one-letter code: Transcription factor UPBEAT1 (102 aa).

The bHLH domain occupies 32 to 82 (IRPRKSVEASRRPCRAIHRRVKTLKELVPNTKTSEGLDGLFRQTADYILAL).

In terms of assembly, homodimer. In terms of tissue distribution, expressed in the root vascular tissue and in root hairs and lateral root caps. Detected at the protein level in all cell files in the elongation zone.

It localises to the nucleus. In terms of biological role, transcription factor that modulates the balance between cellular proliferation and differentiation in root growth. Does not act through cytokinin and auxin signaling, but by repressing peroxidase expression in the elongation zone. The sequence is that of Transcription factor UPBEAT1 (UPB1) from Arabidopsis thaliana (Mouse-ear cress).